The following is a 72-amino-acid chain: MAKEETIQMQGEVIETLPNATFRIKLENGHIVLGHISGKMRMNYIRILPGDKVTVDLTPYDLTRARITFRTK.

The S1-like domain maps to 1–72 (MAKEETIQMQ…TRARITFRTK (72 aa)).

This sequence belongs to the IF-1 family. In terms of assembly, component of the 30S ribosomal translation pre-initiation complex which assembles on the 30S ribosome in the order IF-2 and IF-3, IF-1 and N-formylmethionyl-tRNA(fMet); mRNA recruitment can occur at any time during PIC assembly.

Its subcellular location is the cytoplasm. In terms of biological role, one of the essential components for the initiation of protein synthesis. Stabilizes the binding of IF-2 and IF-3 on the 30S subunit to which N-formylmethionyl-tRNA(fMet) subsequently binds. Helps modulate mRNA selection, yielding the 30S pre-initiation complex (PIC). Upon addition of the 50S ribosomal subunit IF-1, IF-2 and IF-3 are released leaving the mature 70S translation initiation complex. The sequence is that of Translation initiation factor IF-1 from Nitrosomonas eutropha (strain DSM 101675 / C91 / Nm57).